Here is a 163-residue protein sequence, read N- to C-terminus: NADPH-dependent 7-cyano-7-deazaguanine reductase (163 aa).

Residues 1 to 10 (MSKPPRRSPR) are compositionally biased toward basic residues. The interval 1 to 23 (MSKPPRRSPRKPTPASPELQLGH) is disordered. Cys61 acts as the Thioimide intermediate in catalysis. Asp68 functions as the Proton donor in the catalytic mechanism. Residues 83–85 (LES) and 102–103 (HE) each bind substrate.

The protein belongs to the GTP cyclohydrolase I family. QueF type 1 subfamily.

The protein localises to the cytoplasm. It catalyses the reaction 7-aminomethyl-7-carbaguanine + 2 NADP(+) = 7-cyano-7-deazaguanine + 2 NADPH + 3 H(+). Its pathway is tRNA modification; tRNA-queuosine biosynthesis. Functionally, catalyzes the NADPH-dependent reduction of 7-cyano-7-deazaguanine (preQ0) to 7-aminomethyl-7-deazaguanine (preQ1). This chain is NADPH-dependent 7-cyano-7-deazaguanine reductase, found in Rhodopseudomonas palustris (strain BisA53).